The sequence spans 460 residues: Serine--tRNA ligase (460 aa).

Basic and acidic residues predominate over residues 50 to 65 (DRNEVSSKIGELKQAG). Disordered stretches follow at residues 50-71 (DRNEVSSKIGELKQAGDEDAAQ) and 109-129 (PDEDAPVGDSEAENVERRREG). The span at 109–121 (PDEDAPVGDSEAE) shows a compositional bias: acidic residues. 241-243 (TAE) is a binding site for L-serine. ATP contacts are provided by residues 272-274 (RRE) and Val-288. L-serine is bound at residue Glu-295. Residue 368 to 371 (EVSS) coordinates ATP. Position 404 (Ser-404) interacts with L-serine.

It belongs to the class-II aminoacyl-tRNA synthetase family. Type-1 seryl-tRNA synthetase subfamily. As to quaternary structure, homodimer. The tRNA molecule binds across the dimer.

The protein localises to the cytoplasm. The enzyme catalyses tRNA(Ser) + L-serine + ATP = L-seryl-tRNA(Ser) + AMP + diphosphate + H(+). The catalysed reaction is tRNA(Sec) + L-serine + ATP = L-seryl-tRNA(Sec) + AMP + diphosphate + H(+). Its pathway is aminoacyl-tRNA biosynthesis; selenocysteinyl-tRNA(Sec) biosynthesis; L-seryl-tRNA(Sec) from L-serine and tRNA(Sec): step 1/1. In terms of biological role, catalyzes the attachment of serine to tRNA(Ser). Is also able to aminoacylate tRNA(Sec) with serine, to form the misacylated tRNA L-seryl-tRNA(Sec), which will be further converted into selenocysteinyl-tRNA(Sec). The protein is Serine--tRNA ligase of Halobacterium salinarum (strain ATCC 29341 / DSM 671 / R1).